Reading from the N-terminus, the 180-residue chain is NADH-quinone oxidoreductase subunit I (180 aa).

2 4Fe-4S ferredoxin-type domains span residues 50–80 (LTRDPDGEERCVACNLCAVACPVGCISLQKA) and 90–119 (EFFRINFSRCIFCGMCEEACPTTAIQMTPD). [4Fe-4S] cluster-binding residues include Cys60, Cys63, Cys66, Cys70, Cys99, Cys102, Cys105, and Cys109.

It belongs to the complex I 23 kDa subunit family. NDH-1 is composed of 14 different subunits. Subunits NuoA, H, J, K, L, M, N constitute the membrane sector of the complex. It depends on [4Fe-4S] cluster as a cofactor.

It localises to the cell inner membrane. It catalyses the reaction a quinone + NADH + 5 H(+)(in) = a quinol + NAD(+) + 4 H(+)(out). Functionally, NDH-1 shuttles electrons from NADH, via FMN and iron-sulfur (Fe-S) centers, to quinones in the respiratory chain. The immediate electron acceptor for the enzyme in this species is believed to be ubiquinone. Couples the redox reaction to proton translocation (for every two electrons transferred, four hydrogen ions are translocated across the cytoplasmic membrane), and thus conserves the redox energy in a proton gradient. The chain is NADH-quinone oxidoreductase subunit I from Acinetobacter baylyi (strain ATCC 33305 / BD413 / ADP1).